A 169-amino-acid polypeptide reads, in one-letter code: Peptide methionine sulfoxide reductase MsrA (169 aa).

The active site involves cysteine 10.

This sequence belongs to the MsrA Met sulfoxide reductase family.

The catalysed reaction is L-methionyl-[protein] + [thioredoxin]-disulfide + H2O = L-methionyl-(S)-S-oxide-[protein] + [thioredoxin]-dithiol. It catalyses the reaction [thioredoxin]-disulfide + L-methionine + H2O = L-methionine (S)-S-oxide + [thioredoxin]-dithiol. Its function is as follows. Has an important function as a repair enzyme for proteins that have been inactivated by oxidation. Catalyzes the reversible oxidation-reduction of methionine sulfoxide in proteins to methionine. This Streptococcus pyogenes serotype M3 (strain ATCC BAA-595 / MGAS315) protein is Peptide methionine sulfoxide reductase MsrA.